Here is a 502-residue protein sequence, read N- to C-terminus: Probable ADP-dependent glucokinase (502 aa).

The N-terminal stretch at 1-32 (MFSETFVPSIFSYKHRLLHLSVLFFIVPYWYS) is a signal peptide. The ADPK domain occupies 44–497 (SVETAMFLSW…LLYSQFYRLN (454 aa)). N-linked (GlcNAc...) asparagine glycosylation is found at asparagine 89 and asparagine 190. 3 residues coordinate Mg(2+): glutamate 290, glutamate 320, and aspartate 481. Aspartate 481 acts as the Proton acceptor in catalysis.

It belongs to the ADP-dependent glucokinase family. In terms of assembly, monomer. Mg(2+) is required as a cofactor.

The protein localises to the secreted. The enzyme catalyses D-glucose + ADP = D-glucose 6-phosphate + AMP + H(+). It functions in the pathway carbohydrate degradation; glycolysis. Functionally, catalyzes the phosphorylation of D-glucose to D-glucose 6-phosphate using ADP as the phosphate donor. GDP and CDP can replace ADP, but with reduced efficiency. In Caenorhabditis elegans, this protein is Probable ADP-dependent glucokinase.